Here is a 119-residue protein sequence, read N- to C-terminus: Fluoride-specific ion channel FluC 2 (119 aa).

Transmembrane regions (helical) follow at residues 1–21 (MITV…RYGI), 33–53 (FPYA…FIFS), 56–76 (FSPF…TTFS), and 93–113 (VFTL…FLGY). Residues G70 and T73 each contribute to the Na(+) site.

This sequence belongs to the fluoride channel Fluc/FEX (TC 1.A.43) family.

The protein resides in the cell membrane. The catalysed reaction is fluoride(in) = fluoride(out). With respect to regulation, na(+) is not transported, but it plays an essential structural role and its presence is essential for fluoride channel function. In terms of biological role, fluoride-specific ion channel. Important for reducing fluoride concentration in the cell, thus reducing its toxicity. The polypeptide is Fluoride-specific ion channel FluC 2 (Lactobacillus johnsonii (strain CNCM I-12250 / La1 / NCC 533)).